Here is a 335-residue protein sequence, read N- to C-terminus: Non-structural protein P9-1 (335 aa).

Positions 27 to 42 (FNANTKNQNQNTSNTQ) are enriched in low complexity. Residues 27–48 (FNANTKNQNQNTSNTQSSGGIT) are disordered.

In Fiji disease virus (isolate Sugarcane) (FDV), this protein is Non-structural protein P9-1 (S9).